The sequence spans 225 residues: tRNA 2'-phosphotransferase 1 (225 aa).

Residues methionine 1 to arginine 21 form a disordered region.

Belongs to the KptA/TPT1 family.

It catalyses the reaction 2'-phospho-[ligated tRNA] + NAD(+) = mature tRNA + ADP-alpha-D-ribose 1'',2''-cyclic phosphate + nicotinamide. Catalyzes the last step of tRNA splicing, the transfer of the splice junction 2'-phosphate from ligated tRNA to NAD to produce ADP-ribose 1''-2'' cyclic phosphate. The polypeptide is tRNA 2'-phosphotransferase 1 (trpt1) (Danio rerio (Zebrafish)).